Reading from the N-terminus, the 256-residue chain is Hydroxyacylglutathione hydrolase (256 aa).

7 residues coordinate Zn(2+): histidine 54, histidine 56, aspartate 58, histidine 59, histidine 113, aspartate 136, and histidine 174.

This sequence belongs to the metallo-beta-lactamase superfamily. Glyoxalase II family. Monomer. Zn(2+) is required as a cofactor.

The catalysed reaction is an S-(2-hydroxyacyl)glutathione + H2O = a 2-hydroxy carboxylate + glutathione + H(+). The protein operates within secondary metabolite metabolism; methylglyoxal degradation; (R)-lactate from methylglyoxal: step 2/2. Its function is as follows. Thiolesterase that catalyzes the hydrolysis of S-D-lactoyl-glutathione to form glutathione and D-lactic acid. This is Hydroxyacylglutathione hydrolase from Cyanothece sp. (strain PCC 7425 / ATCC 29141).